The primary structure comprises 589 residues: Probable cytochrome P450 49a1 (589 aa).

The segment at 56–90 is disordered; the sequence is TGESSNPKKLNVSQQPVTSVATTRTTASSLPAETT. Residues 57 to 71 show a composition bias toward polar residues; it reads GESSNPKKLNVSQQP. The span at 72 to 84 shows a compositional bias: low complexity; it reads VTSVATTRTTASS. Heme is bound at residue C536.

It belongs to the cytochrome P450 family. Requires heme as cofactor.

The protein resides in the endoplasmic reticulum membrane. The protein localises to the microsome membrane. In terms of biological role, may be involved in the metabolism of insect hormones and in the breakdown of synthetic insecticides. The sequence is that of Probable cytochrome P450 49a1 (Cyp49a1) from Drosophila melanogaster (Fruit fly).